Consider the following 718-residue polypeptide: Protein Smaug homolog 1 (718 aa).

The residue at position 168 (Ser-168) is a Phosphoserine. Disordered regions lie at residues 278–323 (ARGP…EEGS), 416–474 (KAYS…LQPH), and 572–601 (NRGF…QYQI). Positions 323 to 391 (SGMKDVPAWL…ERQNLLKSLE (69 aa)) constitute an SAM domain. Ser-420 is subject to Phosphoserine. Position 424 is a phosphothreonine (Thr-424). The span at 453–466 (GAAATGATATPSAG) shows a compositional bias: low complexity. Omega-N-methylarginine is present on Arg-573. At Ser-580 the chain carries Phosphoserine.

Belongs to the SMAUG family.

It localises to the cytoplasm. It is found in the cell projection. The protein localises to the dendrite. The protein resides in the synapse. Its subcellular location is the synaptosome. Its function is as follows. Acts as a translational repressor of SRE-containing messengers. The protein is Protein Smaug homolog 1 (SAMD4A) of Homo sapiens (Human).